Reading from the N-terminus, the 233-residue chain is DNA-directed RNA polymerase V subunit 5C (233 aa).

It belongs to the archaeal Rpo5/eukaryotic RPB5 RNA polymerase subunit family. Component of the RNA polymerase V complex. As to expression, expressed in flower buds and siliques.

The protein localises to the nucleus. Functionally, DNA-dependent RNA polymerase catalyzes the transcription of DNA into RNA using the four ribonucleoside triphosphates as substrates. Component of RNA polymerase V involved in RNA-directed DNA methylation-dependent (RdDM) silencing of endogenous repeated sequences, including transposable elements. The chain is DNA-directed RNA polymerase V subunit 5C (NRPE5C) from Arabidopsis thaliana (Mouse-ear cress).